The chain runs to 250 residues: Manganese transport system ATP-binding protein MntB (250 aa).

The ABC transporter domain maps to 5–236 (VKVDNLSVFY…MVAKTYQGNL (232 aa)). 37-44 (GPNGAGKS) contributes to the ATP binding site.

It belongs to the ABC transporter superfamily.

It is found in the cell membrane. Functionally, this protein is probably a component of a manganese permease, a binding protein-dependent, ATP-driven transport system. Probably responsible for energy coupling to the transport system. The protein is Manganese transport system ATP-binding protein MntB (mntB) of Halalkalibacterium halodurans (strain ATCC BAA-125 / DSM 18197 / FERM 7344 / JCM 9153 / C-125) (Bacillus halodurans).